We begin with the raw amino-acid sequence, 230 residues long: MEESRFDSEDVDYAEIVVVRHGETSWNAERKIQGHLDVELNDAGRQQAQRVAERLSKEQKISHVYSSDLKRAFETAQIIAAKCGKLEVLTDRDLRERHLGDMQGLVYQEASKIRPEAYKAFSSNRTDVDIPGGGESLDKLYDRCTTALQRIGDKHKGERIVVVTHGGVIRSLYERARPSARKVEKILNTSVNVFRLFDGDKWTIQVWGDVSHLEETGFLQSGFGGDRTSG.

The active-site Tele-phosphohistidine intermediate is His21. Glu96 (proton donor/acceptor) is an active-site residue.

It belongs to the phosphoglycerate mutase family.

Functionally, may play a role in carbohydrates metabolism. This is Phosphoglycerate mutase-like protein 4 from Arabidopsis thaliana (Mouse-ear cress).